Here is a 395-residue protein sequence, read N- to C-terminus: S-adenosylmethionine synthase (395 aa).

His16 provides a ligand contact to ATP. Asp18 is a Mg(2+) binding site. A K(+)-binding site is contributed by Glu44. 2 residues coordinate L-methionine: Glu57 and Gln100. Residues 100–110 (QSPDIAQGVDR) are flexible loop. ATP-binding positions include 167-169 (DAK), 233-234 (RF), Asp242, 248-249 (RK), Ala265, and Lys269. Asp242 lines the L-methionine pocket. Lys273 is a binding site for L-methionine.

The protein belongs to the AdoMet synthase family. In terms of assembly, homotetramer; dimer of dimers. It depends on Mg(2+) as a cofactor. K(+) is required as a cofactor.

It localises to the cytoplasm. The catalysed reaction is L-methionine + ATP + H2O = S-adenosyl-L-methionine + phosphate + diphosphate. The protein operates within amino-acid biosynthesis; S-adenosyl-L-methionine biosynthesis; S-adenosyl-L-methionine from L-methionine: step 1/1. Catalyzes the formation of S-adenosylmethionine (AdoMet) from methionine and ATP. The overall synthetic reaction is composed of two sequential steps, AdoMet formation and the subsequent tripolyphosphate hydrolysis which occurs prior to release of AdoMet from the enzyme. The sequence is that of S-adenosylmethionine synthase from Burkholderia ambifaria (strain MC40-6).